Here is a 688-residue protein sequence, read N- to C-terminus: Phosphoinositide 3-phosphatase (688 aa).

A Myotubularin phosphatase domain is found at 155–637; sequence SWDIYDPIKE…KKVQWWWQLY (483 aa). The active-site Phosphocysteine intermediate is Cys-397. Over residues 647–668 the composition is skewed to basic and acidic residues; it reads ELRHKRDSVPISVDKKSKEHSN. The tract at residues 647–672 is disordered; sequence ELRHKRDSVPISVDKKSKEHSNSDGG.

Belongs to the protein-tyrosine phosphatase family. Non-receptor class myotubularin subfamily.

The protein resides in the cytoplasm. It carries out the reaction a 1,2-diacyl-sn-glycero-3-phospho-(1D-myo-inositol-3-phosphate) + H2O = a 1,2-diacyl-sn-glycero-3-phospho-(1D-myo-inositol) + phosphate. Lipid phosphatase which dephosphorylates phosphatidylinositol 3-monophosphate (PI3P). Involved in the control of PI3P-dependent signaling and in the maintenance of endosomal system integrity. In Saccharomyces cerevisiae (strain ATCC 204508 / S288c) (Baker's yeast), this protein is Phosphoinositide 3-phosphatase.